A 183-amino-acid chain; its full sequence is Large ribosomal subunit protein uL6 (183 aa).

The protein belongs to the universal ribosomal protein uL6 family. As to quaternary structure, part of the 50S ribosomal subunit.

In terms of biological role, this protein binds to the 23S rRNA, and is important in its secondary structure. It is located near the subunit interface in the base of the L7/L12 stalk, and near the tRNA binding site of the peptidyltransferase center. The chain is Large ribosomal subunit protein uL6 from Chlamydia muridarum (strain MoPn / Nigg).